Here is a 437-residue protein sequence, read N- to C-terminus: Enolase (437 aa).

Residue Gln162 coordinates (2R)-2-phosphoglycerate. Glu204 acts as the Proton donor in catalysis. Residues Asp251, Glu297, and Asp324 each coordinate Mg(2+). (2R)-2-phosphoglycerate is bound by residues Lys349, Arg378, Ser379, and Lys400. Residue Lys349 is the Proton acceptor of the active site.

It belongs to the enolase family. It depends on Mg(2+) as a cofactor.

It localises to the cytoplasm. Its subcellular location is the secreted. It is found in the cell surface. It carries out the reaction (2R)-2-phosphoglycerate = phosphoenolpyruvate + H2O. It functions in the pathway carbohydrate degradation; glycolysis; pyruvate from D-glyceraldehyde 3-phosphate: step 4/5. Its function is as follows. Catalyzes the reversible conversion of 2-phosphoglycerate (2-PG) into phosphoenolpyruvate (PEP). It is essential for the degradation of carbohydrates via glycolysis. The chain is Enolase from Chlorobium limicola (strain DSM 245 / NBRC 103803 / 6330).